The chain runs to 115 residues: Large ribosomal subunit protein uL24 (115 aa).

The protein belongs to the universal ribosomal protein uL24 family. Part of the 50S ribosomal subunit.

In terms of biological role, one of two assembly initiator proteins, it binds directly to the 5'-end of the 23S rRNA, where it nucleates assembly of the 50S subunit. Functionally, one of the proteins that surrounds the polypeptide exit tunnel on the outside of the subunit. The protein is Large ribosomal subunit protein uL24 of Acaryochloris marina (strain MBIC 11017).